The sequence spans 72 residues: Heat-stable enterotoxin C (72 aa).

Residues 1 to 19 (MKKIVFVLTLMLFSFGTLG) form the signal peptide. 3 disulfide bridges follow: Cys60/Cys65, Cys61/Cys69, and Cys64/Cys72.

It belongs to the heat-stable enterotoxin family.

The protein resides in the secreted. Toxin which activates the particulate form of guanylate cyclase and increases cyclic GMP levels within the host intestinal epithelial cells. Highly toxic. The polypeptide is Heat-stable enterotoxin C (ystC) (Yersinia enterocolitica).